The primary structure comprises 508 residues: MDTMITTPLILILITCGANSQTVKPDTASESDQPTWSNPLFTYPEGCTLDKLSKVNASQLRCPRIFDDENRGLIAYPTSIRSLSVGNDLGDIHTQGNHIHKVLYRTICSTGFFGGQTIEKALVKMKLSTKEAGAYDTTTAAALYFPAPRCQWYTDNVQNDLIFYYTTQKSVLRDPYTRDFLDSDFIGGKCTKSPCQTHWSNVVWMGDAGIPACDSSQEIKAHLFVDKISNRVVKATSYGHHPWGLHQACMIEFCGQQWIRTDLGDLISVVYNSGSEILSFPKCEDKTVGMRGNLDDFAYLDDLVKASESREECLEAHAEIISTNSVTPYLLSKFRSPHPGINDVYAMHKGSIYHGMCMTVAVDEVSKDRTTYRAHRATSFTKWERPFGDEWEGFHGLHGNNTTIIPDLEKYVAQYKMSMMEPMSIKSVPHPSILALYNETDVSGISIRKLDSFDLQSLHWSFWPTISALGGIPFVLLLAVAACCCWSGRPPTPSVPQSIPMYHLANRS.

Residues 1-20 form the signal peptide; that stretch reads MDTMITTPLILILITCGANS. Topologically, residues 21 to 461 are virion surface; it reads QTVKPDTASE…SFDLQSLHWS (441 aa). 4 N-linked (GlcNAc...) asparagine; by host glycosylation sites follow: Asn56, Asn400, Asn401, and Asn438. The chain crosses the membrane as a helical span at residues 462–482; sequence FWPTISALGGIPFVLLLAVAA. The Intravirion portion of the chain corresponds to 483-508; it reads CCCWSGRPPTPSVPQSIPMYHLANRS.

Belongs to the novirhabdovirus glycoprotein family. As to quaternary structure, homotrimer.

The protein localises to the virion membrane. Functionally, binds to specific receptor at cellular surface, bringing about the attachment of the virus particle to the cell. Plays a major role in the determination of host range restriction and virulence. Class I viral fusion protein. Responsible for penetration of the viral nucleocapsid into the cell cytoplasm by mediating the fusion of the membrane of the endocytosed virus particle with the endosomal membrane. Low pH in endosomes induce an irreversible conformational change in G, releasing a fusion hydrophobic peptide. The protein is Glycoprotein (G) of Salmo (IHNV).